The chain runs to 203 residues: E3 ubiquitin-protein ligase RNF152 (203 aa).

The RING-type zinc finger occupies 12–55; that stretch reads CQICFNYYSPRRRPKLLDCKHTCCSVCLQQMRTSQKDVRCPWCR. The segment at 106-165 is necessary for interaction with RRAGA; sequence ISKERTLLPGDMGCRLLPGSQQKSLTVVTIPAEQQPLQGGAPPEAVEEEPDRRGVVKSST. Residues 139–158 are disordered; the sequence is QQPLQGGAPPEAVEEEPDRR. The chain crosses the membrane as a helical span at residues 167–187; sequence SGVCTVILVACVLVFLLGIVL.

This sequence belongs to the RNF152 family. In terms of assembly, interacts with RRAGA (inactive GDP-bound form); stimulated by amino acid starvation. Interacts with SEC16A. Post-translationally, ubiquitinated. Autoubiquitinated in vitro, leading to its degradation by the proteasome.

The protein localises to the lysosome membrane. It carries out the reaction S-ubiquitinyl-[E2 ubiquitin-conjugating enzyme]-L-cysteine + [acceptor protein]-L-lysine = [E2 ubiquitin-conjugating enzyme]-L-cysteine + N(6)-ubiquitinyl-[acceptor protein]-L-lysine.. It functions in the pathway protein modification; protein ubiquitination. E3 ubiquitin-protein ligase that acts as a negative regulator of mTORC1 signaling by mediating ubiquitination of RagA/RRAGA and RHEB. Catalyzes 'Lys-63'-linked polyubiquitination of RagA/RRAGA in response to amino acid starvation, thereby regulating mTORC1 signaling. Also mediates monoubiquitination of RHEB, promoting its association with the TSC-TBC complex and subsequent inhibition. Also mediates 'Lys-48'-linked polyubiquitination of target proteins and their subsequent targeting to the proteasome for degradation. Induces apoptosis when overexpressed. This Mus musculus (Mouse) protein is E3 ubiquitin-protein ligase RNF152.